Reading from the N-terminus, the 200-residue chain is NADH-quinone oxidoreductase subunit B (200 aa).

The [4Fe-4S] cluster site is built by Cys-78, Cys-79, Cys-144, and Cys-174.

Belongs to the complex I 20 kDa subunit family. In terms of assembly, NDH-1 is composed of 14 different subunits. Subunits NuoB, C, D, E, F, and G constitute the peripheral sector of the complex. Requires [4Fe-4S] cluster as cofactor.

Its subcellular location is the cell membrane. The enzyme catalyses a quinone + NADH + 5 H(+)(in) = a quinol + NAD(+) + 4 H(+)(out). Functionally, NDH-1 shuttles electrons from NADH, via FMN and iron-sulfur (Fe-S) centers, to quinones in the respiratory chain. The immediate electron acceptor for the enzyme in this species is believed to be ubiquinone. Couples the redox reaction to proton translocation (for every two electrons transferred, four hydrogen ions are translocated across the cytoplasmic membrane), and thus conserves the redox energy in a proton gradient. This Dehalococcoides mccartyi (strain CBDB1) protein is NADH-quinone oxidoreductase subunit B.